The chain runs to 301 residues: RNA polymerase II holoenzyme cyclin-like subunit (301 aa).

Residues 53-142 (QQLIKLGKRM…LGECEFALIS (90 aa)) form the Cyclin N-terminal domain.

It belongs to the cyclin family. Cyclin C subfamily. As to quaternary structure, component of the srb8-11 complex, a regulatory module of the Mediator complex.

Its subcellular location is the nucleus. Functionally, component of the srb8-11 complex. The srb8-11 complex is a regulatory module of the Mediator complex which is itself involved in regulation of basal and activated RNA polymerase II-dependent transcription. The srb8-11 complex may be involved in the transcriptional repression of a subset of genes regulated by Mediator. It may inhibit the association of the Mediator complex with RNA polymerase II to form the holoenzyme complex. The srb8-11 complex phosphorylates the C-terminal domain (CTD) of the largest subunit of RNA polymerase II. The chain is RNA polymerase II holoenzyme cyclin-like subunit (ssn8) from Aspergillus oryzae (strain ATCC 42149 / RIB 40) (Yellow koji mold).